A 478-amino-acid polypeptide reads, in one-letter code: Probable cyclin-dependent kinase 9 (478 aa).

Residues Met-1–Arg-17 are compositionally biased toward polar residues. A disordered region spans residues Met-1 to Asn-55. Positions Pro-22–Lys-32 are enriched in basic and acidic residues. A Protein kinase domain is found at Tyr-85–Phe-413. ATP is bound by residues Ile-91–Val-99 and Lys-114. Catalysis depends on Asp-217, which acts as the Proton acceptor. Positions His-444–Phe-478 are disordered. Over residues Gln-451–Pro-464 the composition is skewed to low complexity.

Belongs to the protein kinase superfamily. CMGC Ser/Thr protein kinase family. CDC2/CDKX subfamily. In terms of assembly, associates with cyclin-T (cit-1.1 or cit-1.2) to form P-TEFb.

The protein resides in the nucleus. It catalyses the reaction L-seryl-[protein] + ATP = O-phospho-L-seryl-[protein] + ADP + H(+). It carries out the reaction L-threonyl-[protein] + ATP = O-phospho-L-threonyl-[protein] + ADP + H(+). The catalysed reaction is [DNA-directed RNA polymerase] + ATP = phospho-[DNA-directed RNA polymerase] + ADP + H(+). Its function is as follows. Essential member of the cyclin-dependent kinase pair (CDK9/cyclin-T) complex, also called positive transcription elongation factor B (P-TEFb), which is proposed to facilitate the transition from abortive to production elongation by phosphorylating the CTD (C-terminal domain) of the large subunit of RNA polymerase II (RNAP II) and spt-5. The polypeptide is Probable cyclin-dependent kinase 9 (cdk-9) (Caenorhabditis elegans).